Here is a 1204-residue protein sequence, read N- to C-terminus: Erythroid differentiation-related factor 1 (1204 aa).

Disordered regions lie at residues Met1–Ser30, Gln220–Gln264, Pro483–Ser527, and Lys586–Pro613. Composition is skewed to low complexity over residues Ala9–Ser30, Ser223–Glu241, and Ser253–Ser263. A compositionally biased stretch (acidic residues) spans Asn496–Glu513. TPR repeat units lie at residues Cys693–Asn726 and Asp920–Lys953.

The protein resides in the nucleus. Its function is as follows. Transcription factor involved in erythroid differentiation. Involved in transcriptional activation of the globin gene. In Pongo abelii (Sumatran orangutan), this protein is Erythroid differentiation-related factor 1 (EDRF1).